A 312-amino-acid chain; its full sequence is Methionyl-tRNA formyltransferase (312 aa).

A (6S)-5,6,7,8-tetrahydrofolate-binding site is contributed by 109–112 (SLLP).

Belongs to the Fmt family.

The catalysed reaction is L-methionyl-tRNA(fMet) + (6R)-10-formyltetrahydrofolate = N-formyl-L-methionyl-tRNA(fMet) + (6S)-5,6,7,8-tetrahydrofolate + H(+). Its function is as follows. Attaches a formyl group to the free amino group of methionyl-tRNA(fMet). The formyl group appears to play a dual role in the initiator identity of N-formylmethionyl-tRNA by promoting its recognition by IF2 and preventing the misappropriation of this tRNA by the elongation apparatus. This chain is Methionyl-tRNA formyltransferase, found in Anaeromyxobacter dehalogenans (strain 2CP-1 / ATCC BAA-258).